The following is a 557-amino-acid chain: Dihydroxy-acid dehydratase (557 aa).

Position 78 (Asp-78) interacts with Mg(2+). Cys-119 is a binding site for [2Fe-2S] cluster. Asp-120 and Lys-121 together coordinate Mg(2+). Lys-121 is subject to N6-carboxylysine. Cys-194 contacts [2Fe-2S] cluster. Residue Glu-446 participates in Mg(2+) binding. Catalysis depends on Ser-472, which acts as the Proton acceptor.

Belongs to the IlvD/Edd family. Homodimer. [2Fe-2S] cluster serves as cofactor. It depends on Mg(2+) as a cofactor.

It carries out the reaction (2R)-2,3-dihydroxy-3-methylbutanoate = 3-methyl-2-oxobutanoate + H2O. The enzyme catalyses (2R,3R)-2,3-dihydroxy-3-methylpentanoate = (S)-3-methyl-2-oxopentanoate + H2O. It functions in the pathway amino-acid biosynthesis; L-isoleucine biosynthesis; L-isoleucine from 2-oxobutanoate: step 3/4. The protein operates within amino-acid biosynthesis; L-valine biosynthesis; L-valine from pyruvate: step 3/4. Functions in the biosynthesis of branched-chain amino acids. Catalyzes the dehydration of (2R,3R)-2,3-dihydroxy-3-methylpentanoate (2,3-dihydroxy-3-methylvalerate) into 2-oxo-3-methylpentanoate (2-oxo-3-methylvalerate) and of (2R)-2,3-dihydroxy-3-methylbutanoate (2,3-dihydroxyisovalerate) into 2-oxo-3-methylbutanoate (2-oxoisovalerate), the penultimate precursor to L-isoleucine and L-valine, respectively. The protein is Dihydroxy-acid dehydratase of Desulfosudis oleivorans (strain DSM 6200 / JCM 39069 / Hxd3) (Desulfococcus oleovorans).